Reading from the N-terminus, the 1183-residue chain is Translation initiation factor IF-2 (1183 aa).

Disordered stretches follow at residues 55-512 (KSKT…KVHI) and 538-574 (ASLA…RQRR). The span at 83–99 (TQKDQKTEPKKKNHDQT) shows a compositional bias: basic and acidic residues. Composition is skewed to polar residues over residues 100–143 (ELSQ…QITA) and 165–177 (KPLT…IPQS). A compositionally biased stretch (basic and acidic residues) spans 220–229 (PKIDIQDKKP). Polar residues predominate over residues 231 to 252 (QPNNQKAKTRINQGEISPQKVG). Residues 253 to 267 (QGNIQKIKSQNKQNQ) show a composition bias toward low complexity. Basic and acidic residues predominate over residues 288-304 (IRREKPVNKPHTNEVRN). 2 stretches are compositionally biased toward polar residues: residues 324–349 (QGLS…NRQG) and 357–367 (NRTTQGQNRPG). The span at 485 to 499 (GRPDWDDSAKLDALR) shows a compositional bias: basic and acidic residues. Composition is skewed to basic residues over residues 544–553 (SKPKVGKRNN) and 560–574 (LKKR…RQRR). Positions 675 to 847 (RRPPVVTVMG…VLLVTEVEDL (173 aa)) constitute a tr-type G domain. Residues 684–691 (GHVDHGKT) form a G1 region. 684-691 (GHVDHGKT) is a binding site for GTP. The segment at 709–713 (GITQH) is G2. Positions 734–737 (DTPG) are G3. GTP is bound by residues 734–738 (DTPGH) and 788–791 (NKID). The interval 788–791 (NKID) is G4. The segment at 824-826 (SAI) is G5.

This sequence belongs to the TRAFAC class translation factor GTPase superfamily. Classic translation factor GTPase family. IF-2 subfamily.

The protein localises to the cytoplasm. One of the essential components for the initiation of protein synthesis. Protects formylmethionyl-tRNA from spontaneous hydrolysis and promotes its binding to the 30S ribosomal subunits. Also involved in the hydrolysis of GTP during the formation of the 70S ribosomal complex. The polypeptide is Translation initiation factor IF-2 (Prochlorococcus marinus (strain NATL1A)).